The primary structure comprises 212 residues: Imidazole glycerol phosphate synthase subunit HisH (212 aa).

A Glutamine amidotransferase type-1 domain is found at 1–211; the sequence is MIGVIDYGMG…TKMAAEQQVK (211 aa). The active-site Nucleophile is the Cys-79. Active-site residues include His-186 and Glu-188.

Heterodimer of HisH and HisF.

It is found in the cytoplasm. The catalysed reaction is 5-[(5-phospho-1-deoxy-D-ribulos-1-ylimino)methylamino]-1-(5-phospho-beta-D-ribosyl)imidazole-4-carboxamide + L-glutamine = D-erythro-1-(imidazol-4-yl)glycerol 3-phosphate + 5-amino-1-(5-phospho-beta-D-ribosyl)imidazole-4-carboxamide + L-glutamate + H(+). The enzyme catalyses L-glutamine + H2O = L-glutamate + NH4(+). It participates in amino-acid biosynthesis; L-histidine biosynthesis; L-histidine from 5-phospho-alpha-D-ribose 1-diphosphate: step 5/9. IGPS catalyzes the conversion of PRFAR and glutamine to IGP, AICAR and glutamate. The HisH subunit catalyzes the hydrolysis of glutamine to glutamate and ammonia as part of the synthesis of IGP and AICAR. The resulting ammonia molecule is channeled to the active site of HisF. This chain is Imidazole glycerol phosphate synthase subunit HisH, found in Bacillus velezensis (strain DSM 23117 / BGSC 10A6 / LMG 26770 / FZB42) (Bacillus amyloliquefaciens subsp. plantarum).